The chain runs to 226 residues: Fibronectin type III domain-containing protein 10 (226 aa).

The N-terminal stretch at Met1–Ala20 is a signal peptide. Residues Ala21 to Asp182 are Extracellular-facing. The Fibronectin type-III domain maps to Pro74–Glu166. Asn86 and Asn109 each carry an N-linked (GlcNAc...) asparagine glycan. Residues Ile183 to Leu203 form a helical membrane-spanning segment. Residues Leu204–Pro226 lie on the Cytoplasmic side of the membrane.

The protein localises to the membrane. In Homo sapiens (Human), this protein is Fibronectin type III domain-containing protein 10 (FNDC10).